The primary structure comprises 251 residues: Triosephosphate isomerase (251 aa).

9 to 11 provides a ligand contact to substrate; it reads NWK. H95 acts as the Electrophile in catalysis. E167 (proton acceptor) is an active-site residue. Substrate-binding positions include G173, S212, and 233-234; that span reads GG.

This sequence belongs to the triosephosphate isomerase family. As to quaternary structure, homodimer.

It localises to the cytoplasm. It carries out the reaction D-glyceraldehyde 3-phosphate = dihydroxyacetone phosphate. It participates in carbohydrate biosynthesis; gluconeogenesis. It functions in the pathway carbohydrate degradation; glycolysis; D-glyceraldehyde 3-phosphate from glycerone phosphate: step 1/1. In terms of biological role, involved in the gluconeogenesis. Catalyzes stereospecifically the conversion of dihydroxyacetone phosphate (DHAP) to D-glyceraldehyde-3-phosphate (G3P). The polypeptide is Triosephosphate isomerase (Pseudomonas putida (strain GB-1)).